Here is a 155-residue protein sequence, read N- to C-terminus: UPF0178 protein Amet_2995 (155 aa).

This sequence belongs to the UPF0178 family.

The polypeptide is UPF0178 protein Amet_2995 (Alkaliphilus metalliredigens (strain QYMF)).